We begin with the raw amino-acid sequence, 81 residues long: Acyl carrier protein (81 aa).

The Carrier domain occupies 4-79 (SEIFGKVKDI…AAVDFIAGKV (76 aa)). Position 39 is an O-(pantetheine 4'-phosphoryl)serine (S39).

This sequence belongs to the acyl carrier protein (ACP) family. 4'-phosphopantetheine is transferred from CoA to a specific serine of apo-ACP by AcpS. This modification is essential for activity because fatty acids are bound in thioester linkage to the sulfhydryl of the prosthetic group.

The protein localises to the cytoplasm. The protein operates within lipid metabolism; fatty acid biosynthesis. Its function is as follows. Carrier of the growing fatty acid chain in fatty acid biosynthesis. This chain is Acyl carrier protein, found in Acaryochloris marina (strain MBIC 11017).